The sequence spans 98 residues: MSLINMNLMLAFTMSLTGLLMYRHHLMSALLCLEGMMLSLFTLTTLTILNTHFTLTNMIPIILLVFAACEAAIGLALLVMISSTYGTDYVQSLNLLQC.

A run of 3 helical transmembrane segments spans residues M1–M21, A29–L49, and I61–I81.

This sequence belongs to the complex I subunit 4L family. Core subunit of respiratory chain NADH dehydrogenase (Complex I) which is composed of 45 different subunits.

It is found in the mitochondrion inner membrane. It carries out the reaction a ubiquinone + NADH + 5 H(+)(in) = a ubiquinol + NAD(+) + 4 H(+)(out). Core subunit of the mitochondrial membrane respiratory chain NADH dehydrogenase (Complex I) which catalyzes electron transfer from NADH through the respiratory chain, using ubiquinone as an electron acceptor. Part of the enzyme membrane arm which is embedded in the lipid bilayer and involved in proton translocation. This chain is NADH-ubiquinone oxidoreductase chain 4L (MT-ND4L), found in Platanista minor (Indus river dolphin).